The primary structure comprises 528 residues: Phosphoenolpyruvate carboxykinase (ATP) (528 aa).

Residues R56, Y192, and K198 each coordinate substrate. Residues K198, H217, and 233–241 contribute to the ATP site; that span reads GLSGTGKTT. Mn(2+) is bound by residues K198 and H217. D254 is a Mn(2+) binding site. Residues E282, R319, and T444 each coordinate ATP. R319 is a substrate binding site.

This sequence belongs to the phosphoenolpyruvate carboxykinase (ATP) family. Mn(2+) serves as cofactor.

The protein resides in the cytoplasm. It catalyses the reaction oxaloacetate + ATP = phosphoenolpyruvate + ADP + CO2. Its pathway is carbohydrate biosynthesis; gluconeogenesis. In terms of biological role, involved in the gluconeogenesis. Catalyzes the conversion of oxaloacetate (OAA) to phosphoenolpyruvate (PEP) through direct phosphoryl transfer between the nucleoside triphosphate and OAA. The polypeptide is Phosphoenolpyruvate carboxykinase (ATP) (Bacillus cereus (strain B4264)).